Consider the following 121-residue polypeptide: Large ribosomal subunit protein uL24 (121 aa).

It belongs to the universal ribosomal protein uL24 family. As to quaternary structure, part of the 50S ribosomal subunit.

Its function is as follows. One of two assembly initiator proteins, it binds directly to the 5'-end of the 23S rRNA, where it nucleates assembly of the 50S subunit. Located at the polypeptide exit tunnel on the outside of the subunit. The chain is Large ribosomal subunit protein uL24 from Pyrococcus abyssi (strain GE5 / Orsay).